The chain runs to 412 residues: Histone-lysine N-methyltransferase SUV39H1 (412 aa).

The segment at 1–89 is interaction with SIRT1; it reads MAENLKGCSV…LKCIRVLKQF (89 aa). The 59-residue stretch at 43-101 folds into the Chromo domain; it reads FEVEYLCDYKKIREQEYYLVKWRGYPDSENTWEPRQNLKCIRVLKQFHKDLERELVRRH. Residues 179-240 form the Pre-SET domain; sequence VGCECQDCLL…DCPNRVVQKG (62 aa). 9 residues coordinate Zn(2+): C181, C183, C186, C194, C195, C222, C226, C228, and C232. An SET domain is found at 243 to 366; that stretch reads YDLCIFRTND…AGEELTFDYN (124 aa). S-adenosyl-L-methionine is bound at residue 254–256; the sequence is RGW. The tract at residues 255–377 is mediates interaction with MECOM; sequence GWGVRTLEKI…QVDPVDMEST (123 aa). An N6-acetyllysine modification is found at K266. S-adenosyl-L-methionine contacts are provided by residues Y297 and 323–324; that span reads NH. C326 provides a ligand contact to Zn(2+). S391 bears the Phosphoserine mark. The Post-SET domain maps to 396 to 412; the sequence is VRIECKCGTTACRKYLF. Zn(2+) is bound by residues C400, C402, and C407.

It belongs to the class V-like SAM-binding methyltransferase superfamily. Histone-lysine methyltransferase family. Suvar3-9 subfamily. As to quaternary structure, interacts with CCAR2 and GFI1B. Component of the eNoSC complex, composed of SIRT1, SUV39H1 and RRP8. Interacts with H3 and H4 histones. Interacts with DNMT3B, CBX1, CBX4, MBD1, RUNX1, RUNX3, MYOD1, SMAD5 and RB1. Interacts with SBF1 through the SET domain. Interacts with HDAC1 and HDAC2 through the N-terminus and associates with the core histone deacetylase complex composed of HDAC1, HDAC2, RBBP4 and RBBP7. Interacts (via SET domain) with MECOM; enhances MECOM transcriptional repression activity. Interacts with LMNA; the interaction increases stability of SUV39H1. The large PER complex involved in the histone methylation is composed of at least PER2, CBX3, TRIM28, SUV39H1 and/or SUV39H2; CBX3 mediates the formation of the complex. Post-translationally, phosphorylated on serine residues, and to a lesser degree, on threonine residues. In terms of processing, acetylated at Lys-266, leading to inhibition of enzyme activity. SIRT1-mediated deacetylation relieves this inhibition. Ubiquitinated by the DCX(DCAF13) E3 ubiquitin ligase complex, leading to its degradation. Widely expressed.

Its subcellular location is the nucleus. The protein resides in the nucleus lamina. It localises to the nucleoplasm. It is found in the chromosome. The protein localises to the centromere. The catalysed reaction is L-lysyl(9)-[histone H3] + 3 S-adenosyl-L-methionine = N(6),N(6),N(6)-trimethyl-L-lysyl(9)-[histone H3] + 3 S-adenosyl-L-homocysteine + 3 H(+). Negatively regulated by CCAR2. Functionally, histone methyltransferase that specifically trimethylates 'Lys-9' of histone H3 using monomethylated H3 'Lys-9' as substrate. H3 'Lys-9' trimethylation represents a specific tag for epigenetic transcriptional repression by recruiting HP1 (CBX1, CBX3 and/or CBX5) proteins to methylated histones. Mainly functions in heterochromatin regions, thereby playing a central role in the establishment of constitutive heterochromatin at pericentric and telomere regions. H3 'Lys-9' trimethylation is also required to direct DNA methylation at pericentric repeats. SUV39H1 is targeted to histone H3 via its interaction with RB1 and is involved in many processes, such as repression of MYOD1-stimulated differentiation, regulation of the control switch for exiting the cell cycle and entering differentiation, repression by the PML-RARA fusion protein, BMP-induced repression, repression of switch recombination to IgA and regulation of telomere length. Component of the eNoSC (energy-dependent nucleolar silencing) complex, a complex that mediates silencing of rDNA in response to intracellular energy status and acts by recruiting histone-modifying enzymes. The eNoSC complex is able to sense the energy status of cell: upon glucose starvation, elevation of NAD(+)/NADP(+) ratio activates SIRT1, leading to histone H3 deacetylation followed by dimethylation of H3 at 'Lys-9' (H3K9me2) by SUV39H1 and the formation of silent chromatin in the rDNA locus. Recruited by the PER complex to the E-box elements of the circadian target genes such as PER2 itself or PER1, contributes to the conversion of local chromatin to a heterochromatin-like repressive state through H3 'Lys-9' trimethylation. The protein is Histone-lysine N-methyltransferase SUV39H1 (Suv39h1) of Mus musculus (Mouse).